The primary structure comprises 469 residues: ATP synthase subunit beta (469 aa).

156-163 (GGAGVGKT) is a binding site for ATP.

It belongs to the ATPase alpha/beta chains family. F-type ATPases have 2 components, CF(1) - the catalytic core - and CF(0) - the membrane proton channel. CF(1) has five subunits: alpha(3), beta(3), gamma(1), delta(1), epsilon(1). CF(0) has three main subunits: a(1), b(2) and c(9-12). The alpha and beta chains form an alternating ring which encloses part of the gamma chain. CF(1) is attached to CF(0) by a central stalk formed by the gamma and epsilon chains, while a peripheral stalk is formed by the delta and b chains.

It localises to the cell membrane. It carries out the reaction ATP + H2O + 4 H(+)(in) = ADP + phosphate + 5 H(+)(out). Its function is as follows. Produces ATP from ADP in the presence of a proton gradient across the membrane. The catalytic sites are hosted primarily by the beta subunits. This is ATP synthase subunit beta from Lactococcus lactis subsp. cremoris (strain SK11).